The sequence spans 352 residues: Photosystem II protein D1 (352 aa).

Thr2 carries the N-acetylthreonine modification. Thr2 carries the post-translational modification Phosphothreonine. The next 3 helical transmembrane spans lie at 29–46 (YIGW…TATS), 118–133 (HFFL…EWEL), and 142–156 (WIAV…AATA). Residue His118 coordinates chlorophyll a. Tyr126 serves as a coordination point for pheophytin a. 2 residues coordinate [CaMn4O5] cluster: Asp170 and Glu189. Residues 197–218 (FHMLGVAGVFGGSLFSAMHGSL) traverse the membrane as a helical segment. His198 provides a ligand contact to chlorophyll a. A quinone is bound by residues His215 and 264–265 (SF). Residue His215 coordinates Fe cation. Residue His272 participates in Fe cation binding. Residues 274 to 288 (FLAAWPVVGIWFTAL) traverse the membrane as a helical segment. Residues His332, Glu333, Asp342, and Ala344 each coordinate [CaMn4O5] cluster. A propeptide spanning residues 345 to 352 (SVEAPSIA) is cleaved from the precursor.

It belongs to the reaction center PufL/M/PsbA/D family. In terms of assembly, PSII is composed of 1 copy each of membrane proteins PsbA, PsbB, PsbC, PsbD, PsbE, PsbF, PsbH, PsbI, PsbJ, PsbK, PsbL, PsbM, PsbT, PsbX, PsbY, PsbZ, Psb30/Ycf12, at least 3 peripheral proteins of the oxygen-evolving complex and a large number of cofactors. It forms dimeric complexes. The cofactor is The D1/D2 heterodimer binds P680, chlorophylls that are the primary electron donor of PSII, and subsequent electron acceptors. It shares a non-heme iron and each subunit binds pheophytin, quinone, additional chlorophylls, carotenoids and lipids. D1 provides most of the ligands for the Mn4-Ca-O5 cluster of the oxygen-evolving complex (OEC). There is also a Cl(-1) ion associated with D1 and D2, which is required for oxygen evolution. The PSII complex binds additional chlorophylls, carotenoids and specific lipids.. Tyr-161 forms a radical intermediate that is referred to as redox-active TyrZ, YZ or Y-Z. Post-translationally, C-terminally processed by CTPA; processing is essential to allow assembly of the oxygen-evolving complex and thus photosynthetic growth.

It is found in the plastid. It localises to the chloroplast thylakoid membrane. It carries out the reaction 2 a plastoquinone + 4 hnu + 2 H2O = 2 a plastoquinol + O2. Functionally, photosystem II (PSII) is a light-driven water:plastoquinone oxidoreductase that uses light energy to abstract electrons from H(2)O, generating O(2) and a proton gradient subsequently used for ATP formation. It consists of a core antenna complex that captures photons, and an electron transfer chain that converts photonic excitation into a charge separation. The D1/D2 (PsbA/PsbD) reaction center heterodimer binds P680, the primary electron donor of PSII as well as several subsequent electron acceptors. In Chlorella ellipsoidea, this protein is Photosystem II protein D1.